A 307-amino-acid polypeptide reads, in one-letter code: Nicotinamide/nicotinic acid mononucleotide adenylyltransferase 2 (307 aa).

S16 and F17 together coordinate NAD(+). H24 lines the ATP pocket. 2 residues coordinate NAD(+): W92 and T95. 2 S-palmitoyl cysteine lipidation sites follow: C164 and C165. G200, D202, L212, W213, and R232 together coordinate NAD(+). Position 271–274 (271–274) interacts with ATP; that stretch reads TKSR.

This sequence belongs to the eukaryotic NMN adenylyltransferase family. As to quaternary structure, monomer. It depends on Mg(2+) as a cofactor. Post-translationally, degraded in response to injured neurite. Degradation is caused by polyubiquitination by MYCBP2 after recognition by FBXO45. In terms of processing, palmitoylated; palmitoylation is required for membrane association.

It is found in the golgi apparatus membrane. The protein resides in the cytoplasmic vesicle membrane. Its subcellular location is the cytoplasm. It localises to the cell projection. The protein localises to the axon. The catalysed reaction is beta-nicotinamide D-ribonucleotide + ATP + H(+) = diphosphate + NAD(+). It catalyses the reaction nicotinate beta-D-ribonucleotide + ATP + H(+) = deamido-NAD(+) + diphosphate. Its pathway is cofactor biosynthesis; NAD(+) biosynthesis; NAD(+) from nicotinamide D-ribonucleotide: step 1/1. It participates in cofactor biosynthesis; NAD(+) biosynthesis; deamido-NAD(+) from nicotinate D-ribonucleotide: step 1/1. Its activity is regulated as follows. Inhibited by P1-(adenosine-5')-P3-(nicotinamide-riboside-5')-triphosphate (Np3AD) and P1-(adenosine-5')-P4-(nicotinamide-riboside-5')-tetraphosphate (Np4AD). Functionally, nicotinamide/nicotinate-nucleotide adenylyltransferase that acts as an axon maintenance factor. Axon survival factor required for the maintenance of healthy axons: acts by delaying Wallerian axon degeneration, an evolutionarily conserved process that drives the loss of damaged axons. Catalyzes the formation of NAD(+) from nicotinamide mononucleotide (NMN) and ATP. Can also use the deamidated form; nicotinic acid mononucleotide (NaMN) as substrate but with a lower efficiency. Cannot use triazofurin monophosphate (TrMP) as substrate. Also catalyzes the reverse reaction, i.e. the pyrophosphorolytic cleavage of NAD(+). For the pyrophosphorolytic activity prefers NAD(+), NADH and NaAD as substrates and degrades nicotinic acid adenine dinucleotide phosphate (NHD) less effectively. Fails to cleave phosphorylated dinucleotides NADP(+), NADPH and NaADP(+). Also acts as an activator of ADP-ribosylation by supporting the catalytic activity of PARP16 and promoting mono-ADP-ribosylation of ribosomes by PARP16. May be involved in the maintenance of axonal integrity. This chain is Nicotinamide/nicotinic acid mononucleotide adenylyltransferase 2 (NMNAT2), found in Bos taurus (Bovine).